The primary structure comprises 839 residues: Protein translocase subunit SecA (839 aa).

ATP contacts are provided by residues Gln85, 103–107, and Asp493; that span reads GEGKT. A compositionally biased stretch (basic and acidic residues) spans 780–790; that stretch reads QIHEQERERAS. Residues 780 to 839 form a disordered region; sequence QIHEQERERASQRATTAAPQNIQSQQSANTDDLPKVERNEACPCGSGKKFKNCHGRKSFS. Positions 791 to 809 are enriched in polar residues; sequence QRATTAAPQNIQSQQSANT. 4 residues coordinate Zn(2+): Cys821, Cys823, Cys832, and His833. Basic residues predominate over residues 827–839; the sequence is KKFKNCHGRKSFS.

This sequence belongs to the SecA family. In terms of assembly, monomer and homodimer. Part of the essential Sec protein translocation apparatus which comprises SecA, SecYEG and auxiliary proteins SecDF. Other proteins may also be involved. The cofactor is Zn(2+).

Its subcellular location is the cell membrane. The protein resides in the cytoplasm. It catalyses the reaction ATP + H2O + cellular proteinSide 1 = ADP + phosphate + cellular proteinSide 2.. In terms of biological role, part of the Sec protein translocase complex. Interacts with the SecYEG preprotein conducting channel. Has a central role in coupling the hydrolysis of ATP to the transfer of proteins into and across the cell membrane, serving as an ATP-driven molecular motor driving the stepwise translocation of polypeptide chains across the membrane. This Streptococcus pyogenes serotype M28 (strain MGAS6180) protein is Protein translocase subunit SecA.